The chain runs to 340 residues: DNA-directed RNA polymerase subunit alpha (340 aa).

The segment at 1-233 (MVREEVAVST…DLFIPFLHAE (233 aa)) is alpha N-terminal domain (alpha-NTD). The tract at residues 266-340 (KKEIALKCIF…GIDLPKNKRF (75 aa)) is alpha C-terminal domain (alpha-CTD).

Belongs to the RNA polymerase alpha chain family. In plastids the minimal PEP RNA polymerase catalytic core is composed of four subunits: alpha, beta, beta', and beta''. When a (nuclear-encoded) sigma factor is associated with the core the holoenzyme is formed, which can initiate transcription.

It localises to the plastid. The protein localises to the chloroplast. The catalysed reaction is RNA(n) + a ribonucleoside 5'-triphosphate = RNA(n+1) + diphosphate. In terms of biological role, DNA-dependent RNA polymerase catalyzes the transcription of DNA into RNA using the four ribonucleoside triphosphates as substrates. This is DNA-directed RNA polymerase subunit alpha from Calycanthus floridus var. glaucus (Eastern sweetshrub).